We begin with the raw amino-acid sequence, 357 residues long: Arginine kinase Met e 2 (357 aa).

A Phosphagen kinase N-terminal domain is found at 9 to 91 (KLEAGFKKLE…FDPIIEDYHV (83 aa)). 64-68 (GVGIY) provides a ligand contact to L-arginine. The Phosphagen kinase C-terminal domain maps to 119–356 (FVISTRVRCG…LELIKIEKEM (238 aa)). Residues 122-126 (STRVR) and His185 each bind ATP. An L-arginine-binding site is contributed by Glu225. Position 229 (Arg229) interacts with ATP. Residue Cys271 participates in L-arginine binding. ATP contacts are provided by residues 280–284 (RASVH) and 309–314 (RGTRGE). Residue Glu314 participates in L-arginine binding.

Belongs to the ATP:guanido phosphotransferase family.

The enzyme catalyses L-arginine + ATP = N(omega)-phospho-L-arginine + ADP + H(+). Catalyzes the reversible transfer of high energy ATP gamma-phosphate group to L-arginine. The chain is Arginine kinase Met e 2 from Metapenaeus ensis (Greasyback shrimp).